The sequence spans 270 residues: 4-hydroxy-tetrahydrodipicolinate reductase (270 aa).

NAD(+) is bound by residues 8–13 (GAAGRM) and glutamate 34. An NADP(+)-binding site is contributed by arginine 35. NAD(+) contacts are provided by residues 98 to 100 (GST) and 122 to 125 (SPNM). The active-site Proton donor/acceptor is the histidine 155. Histidine 156 contacts (S)-2,3,4,5-tetrahydrodipicolinate. Catalysis depends on lysine 159, which acts as the Proton donor. A (S)-2,3,4,5-tetrahydrodipicolinate-binding site is contributed by 165-166 (GT).

It belongs to the DapB family.

It is found in the cytoplasm. The catalysed reaction is (S)-2,3,4,5-tetrahydrodipicolinate + NAD(+) + H2O = (2S,4S)-4-hydroxy-2,3,4,5-tetrahydrodipicolinate + NADH + H(+). It carries out the reaction (S)-2,3,4,5-tetrahydrodipicolinate + NADP(+) + H2O = (2S,4S)-4-hydroxy-2,3,4,5-tetrahydrodipicolinate + NADPH + H(+). It participates in amino-acid biosynthesis; L-lysine biosynthesis via DAP pathway; (S)-tetrahydrodipicolinate from L-aspartate: step 4/4. Functionally, catalyzes the conversion of 4-hydroxy-tetrahydrodipicolinate (HTPA) to tetrahydrodipicolinate. The sequence is that of 4-hydroxy-tetrahydrodipicolinate reductase from Anaeromyxobacter dehalogenans (strain 2CP-C).